The chain runs to 540 residues: 2,3-bisphosphoglycerate-independent phosphoglycerate mutase (540 aa).

The Mn(2+) site is built by Asp-24 and Ser-74. Ser-74 functions as the Phosphoserine intermediate in the catalytic mechanism. Residues His-135, Arg-165 to Asp-166, Arg-197, Arg-203, Arg-268 to Arg-271, and Lys-341 each bind substrate. Positions 408, 412, 449, 450, and 467 each coordinate Mn(2+).

It belongs to the BPG-independent phosphoglycerate mutase family. As to quaternary structure, monomer. Mn(2+) serves as cofactor.

The enzyme catalyses (2R)-2-phosphoglycerate = (2R)-3-phosphoglycerate. It functions in the pathway carbohydrate degradation; glycolysis; pyruvate from D-glyceraldehyde 3-phosphate: step 3/5. Functionally, catalyzes the interconversion of 2-phosphoglycerate and 3-phosphoglycerate. In Prochlorococcus marinus (strain MIT 9313), this protein is 2,3-bisphosphoglycerate-independent phosphoglycerate mutase.